The sequence spans 288 residues: ATP synthase gamma chain (288 aa).

Belongs to the ATPase gamma chain family. In terms of assembly, F-type ATPases have 2 components, CF(1) - the catalytic core - and CF(0) - the membrane proton channel. CF(1) has five subunits: alpha(3), beta(3), gamma(1), delta(1), epsilon(1). CF(0) has three main subunits: a, b and c.

Its subcellular location is the cell inner membrane. Its function is as follows. Produces ATP from ADP in the presence of a proton gradient across the membrane. The gamma chain is believed to be important in regulating ATPase activity and the flow of protons through the CF(0) complex. The chain is ATP synthase gamma chain from Actinobacillus pleuropneumoniae serotype 5b (strain L20).